The following is a 290-amino-acid chain: ORF2/4 protein (290 aa).

Residues 67-218 (LPAAPEAPGD…KSRYQPYLVT (152 aa)) form a disordered region. Over residues 121–130 (RPQETQEGHR) the composition is skewed to basic and acidic residues. The span at 181–190 (AAQAAAAATA) shows a compositional bias: low complexity. Over residues 191–200 (NPGSQTQTPV) the composition is skewed to polar residues.

This is ORF2/4 protein from Torque teno virus (isolate Human/Japan/TRM1/1999) (TTV).